The sequence spans 404 residues: S-adenosylmethionine synthase (404 aa).

Over residues 1–13 the composition is skewed to polar residues; the sequence is MSHSRYFFTSESV. Residues 1-20 form a disordered region; it reads MSHSRYFFTSESVSEGHPDK. His-17 is a binding site for ATP. Position 19 (Asp-19) interacts with Mg(2+). K(+) is bound at residue Glu-45. Residues Glu-58 and Gln-101 each coordinate L-methionine. Residues 101–111 form a flexible loop region; sequence QSPDINRGVDR. ATP is bound by residues 172–174, 246–247, Asp-255, 261–262, Ala-278, and Lys-282; these read DSK, RF, and RK. Position 255 (Asp-255) interacts with L-methionine. Lys-286 contacts L-methionine.

This sequence belongs to the AdoMet synthase family. As to quaternary structure, homotetramer; dimer of dimers. Requires Mg(2+) as cofactor. K(+) is required as a cofactor.

The protein resides in the cytoplasm. The catalysed reaction is L-methionine + ATP + H2O = S-adenosyl-L-methionine + phosphate + diphosphate. It functions in the pathway amino-acid biosynthesis; S-adenosyl-L-methionine biosynthesis; S-adenosyl-L-methionine from L-methionine: step 1/1. Catalyzes the formation of S-adenosylmethionine (AdoMet) from methionine and ATP. The overall synthetic reaction is composed of two sequential steps, AdoMet formation and the subsequent tripolyphosphate hydrolysis which occurs prior to release of AdoMet from the enzyme. In Chlorobaculum parvum (strain DSM 263 / NCIMB 8327) (Chlorobium vibrioforme subsp. thiosulfatophilum), this protein is S-adenosylmethionine synthase.